The chain runs to 380 residues: QRFP-like peptide receptor (380 aa).

Over 1-51 the chain is Extracellular; the sequence is MMLGNMTFTQTILHELLRQHNMTKNEFIERFGLPPLVYVPELSPGAKTVTL. Residues Asn5 and Asn21 are each glycosylated (N-linked (GlcNAc...) asparagine). The chain crosses the membrane as a helical span at residues 52 to 72; the sequence is VFYVIIFLAALLGNTLVVVVV. At 73-83 the chain is on the cytoplasmic side; the sequence is WKNKVMRTTMN. A helical membrane pass occupies residues 84-104; the sequence is IFICSLAASDLLITIVCIPVT. The Extracellular segment spans residues 105–122; sequence LMQNMLQNWIMGDFMCKL. Cys120 and Cys203 are disulfide-bonded. Residues 123-143 form a helical membrane-spanning segment; the sequence is VPFIQTIAVASSILTLTGIAI. The Cytoplasmic segment spans residues 144–164; the sequence is ERYYAIIHPLKVKYLLSKTRA. The helical transmembrane segment at 165–185 threads the bilayer; the sequence is GIILALVWVVSVGVATPMLFV. Residues 186–216 lie on the Extracellular side of the membrane; that stretch reads HKAEEIHDFLYEQRFVTCQEKWWGQTQQTSY. The helical transmembrane segment at 217-237 threads the bilayer; the sequence is TIFNLVVLFIIPLLTMTSLYI. The Cytoplasmic portion of the chain corresponds to 238 to 269; that stretch reads RIAHRLWVQQPVGVTGNFAHGNSVRRKRQAVK. The chain crosses the membrane as a helical span at residues 270-290; it reads MLVVVVLLFAVCWLPYHTVTV. Residues 291–305 are Extracellular-facing; the sequence is MNELTGLRLEEKSAK. The helical transmembrane segment at 306–326 threads the bilayer; it reads LLIAIVQLIAFSNSFNNPVVY. Residues 327–380 are Cytoplasmic-facing; that stretch reads AILNENFKKNFMTMLRCRVNRVSPQQVTPNTLQTPLEQSTRSCRLPAGAPNQQI.

It belongs to the G-protein coupled receptor 1 family.

The protein localises to the cell membrane. In terms of biological role, receptor for QRFP-like peptide. The activity of this receptor is mediated by G proteins which activate a phosphatidyl-inositol-calcium second messenger system. This Branchiostoma floridae (Florida lancelet) protein is QRFP-like peptide receptor.